Here is a 219-residue protein sequence, read N- to C-terminus: 7-carboxy-7-deazaguanine synthase (219 aa).

Residues 12–14 (IQG) and arginine 27 each bind substrate. The Radical SAM core domain occupies 18-219 (YTGTPSIFIR…VQIHKYLKIR (202 aa)). Cysteine 31, cysteine 35, and cysteine 38 together coordinate [4Fe-4S] cluster. Position 40 (threonine 40) interacts with Mg(2+). Threonine 92 serves as a coordination point for substrate. S-adenosyl-L-methionine contacts are provided by residues glycine 94 and 136 to 138 (SPK).

It belongs to the radical SAM superfamily. 7-carboxy-7-deazaguanine synthase family. In terms of assembly, homodimer. [4Fe-4S] cluster is required as a cofactor. Requires S-adenosyl-L-methionine as cofactor. Mg(2+) serves as cofactor.

It carries out the reaction 6-carboxy-5,6,7,8-tetrahydropterin + H(+) = 7-carboxy-7-deazaguanine + NH4(+). It participates in purine metabolism; 7-cyano-7-deazaguanine biosynthesis. Catalyzes the complex heterocyclic radical-mediated conversion of 6-carboxy-5,6,7,8-tetrahydropterin (CPH4) to 7-carboxy-7-deazaguanine (CDG), a step common to the biosynthetic pathways of all 7-deazapurine-containing compounds. The polypeptide is 7-carboxy-7-deazaguanine synthase (Buchnera aphidicola subsp. Schizaphis graminum (strain Sg)).